The sequence spans 402 residues: B3 domain-containing protein LFL1 (402 aa).

The tract at residues 1–174 is disordered; it reads MRGEERWQEQ…AAPRPSSHHT (174 aa). Over residues 74–87 the composition is skewed to low complexity; sequence ARPPTLAASAAAAS. The segment covering 88–102 has biased composition (pro residues); sequence SPPPPPPPPIPPLPP. 2 stretches are compositionally biased toward low complexity: residues 103–139 and 156–169; these read STST…AAVS and PRPA…APRP. The segment at residues 181–284 is a DNA-binding region (TF-B3); that stretch reads LQKELRYSDV…RFVIGAKKAG (104 aa). Residues 381–402 form a disordered region; that stretch reads LHVTDDKSGHSLIPNPKSGPHM.

Expressed in anthers, pollen grains and young developing embryos.

It is found in the nucleus. In terms of biological role, transcription repressor involved in flowering time regulation. Represses the flowering activator EHD1 by binding specifically to the DNA sequence 5'-CATGCATG-3 of its promoter. The sequence is that of B3 domain-containing protein LFL1 (LFL1) from Oryza sativa subsp. japonica (Rice).